We begin with the raw amino-acid sequence, 413 residues long: Gamma-glutamyl phosphate reductase (413 aa).

It belongs to the gamma-glutamyl phosphate reductase family.

It localises to the cytoplasm. The enzyme catalyses L-glutamate 5-semialdehyde + phosphate + NADP(+) = L-glutamyl 5-phosphate + NADPH + H(+). It functions in the pathway amino-acid biosynthesis; L-proline biosynthesis; L-glutamate 5-semialdehyde from L-glutamate: step 2/2. In terms of biological role, catalyzes the NADPH-dependent reduction of L-glutamate 5-phosphate into L-glutamate 5-semialdehyde and phosphate. The product spontaneously undergoes cyclization to form 1-pyrroline-5-carboxylate. This Lactococcus lactis subsp. lactis (strain IL1403) (Streptococcus lactis) protein is Gamma-glutamyl phosphate reductase.